Here is a 751-residue protein sequence, read N- to C-terminus: Centrosomal protein of 68 kDa (751 aa).

Composition is skewed to basic and acidic residues over residues methionine 1–lysine 17 and alanine 86–glutamate 96. Positions methionine 1–alanine 253 are disordered. 2 stretches are compositionally biased toward polar residues: residues leucine 131–cysteine 144 and alanine 163–lysine 175. Residues serine 176–serine 200 show a composition bias toward low complexity. Serine 326 is modified (phosphoserine). Residues serine 339 to phenylalanine 348 are compositionally biased toward polar residues. 3 disordered regions span residues serine 339 to aspartate 474, serine 511 to proline 545, and arginine 590 to glutamate 611. Basic and acidic residues-rich tracts occupy residues glycine 399–lysine 416 and arginine 433–threonine 450. Positions serine 451–glutamate 461 are enriched in polar residues. Phosphoserine occurs at positions 466 and 472. Over residues glycine 520–alanine 537 the composition is skewed to low complexity.

Interacts with CNTLN; the interaction recruits CEP68 to the centrosome. Interacts with the SCF(FBXW11) complex which contains SKP1, CUL1 and FBXW11; the interaction is probably mediated by FBXW11 and the complex also contains CDK5RAP2 and PCNT. Also interacts with F-box protein BTRC. Interacts with serine/threonine-protein kinase PLK1; the interaction leads to phosphorylation of CEP68 and its subsequent degradation. Interacts with NEK2; the interaction leads to phosphorylation of CEP68. Phosphorylation by PLK1 is required for binding to BTRC in prometaphase. Phosphorylated directly or indirectly by NEK2. NEK2-mediated phosphorylation promotes CEP68 dissociation from the centrosome and its degradation at the onset of mitosis. In terms of processing, ubiquitinated and targeted for proteasomal degradation in early mitosis by the SCF(BTRC) and/or SCF(FBXW11) E3 ubiquitin-protein ligase complexes. Degradation is complete by prometaphase and is required for removal of CDK5RAP2 from the peripheral pericentriolar material and subsequent centriole separation.

It is found in the cytoplasm. Its subcellular location is the cytoskeleton. The protein localises to the microtubule organizing center. It localises to the centrosome. Functionally, involved in maintenance of centrosome cohesion, probably as part of a linker structure which prevents centrosome splitting. Required for localization of CDK5RAP2 to the centrosome during interphase. Contributes to CROCC/rootletin filament formation. The chain is Centrosomal protein of 68 kDa (CEP68) from Pongo abelii (Sumatran orangutan).